Here is a 523-residue protein sequence, read N- to C-terminus: 2-isopropylmalate synthase (523 aa).

Residues 5–267 enclose the Pyruvate carboxyltransferase domain; that stretch reads VIIFDTTLRD…HTNINHHEIW (263 aa). Residues aspartate 14, histidine 202, histidine 204, and asparagine 238 each coordinate Mn(2+). The regulatory domain stretch occupies residues 392 to 523; the sequence is RLDYFSVQSG…QNKENNKETV (132 aa).

The protein belongs to the alpha-IPM synthase/homocitrate synthase family. LeuA type 1 subfamily. In terms of assembly, homodimer. It depends on Mn(2+) as a cofactor.

The protein localises to the cytoplasm. It catalyses the reaction 3-methyl-2-oxobutanoate + acetyl-CoA + H2O = (2S)-2-isopropylmalate + CoA + H(+). The protein operates within amino-acid biosynthesis; L-leucine biosynthesis; L-leucine from 3-methyl-2-oxobutanoate: step 1/4. Catalyzes the condensation of the acetyl group of acetyl-CoA with 3-methyl-2-oxobutanoate (2-ketoisovalerate) to form 3-carboxy-3-hydroxy-4-methylpentanoate (2-isopropylmalate). The protein is 2-isopropylmalate synthase of Salmonella dublin (strain CT_02021853).